The following is a 1358-amino-acid chain: DNA-directed RNA polymerase subunit beta (1358 aa).

This sequence belongs to the RNA polymerase beta chain family. As to quaternary structure, the RNAP catalytic core consists of 2 alpha, 1 beta, 1 beta' and 1 omega subunit. When a sigma factor is associated with the core the holoenzyme is formed, which can initiate transcription.

The enzyme catalyses RNA(n) + a ribonucleoside 5'-triphosphate = RNA(n+1) + diphosphate. Its function is as follows. DNA-dependent RNA polymerase catalyzes the transcription of DNA into RNA using the four ribonucleoside triphosphates as substrates. In Azotobacter vinelandii (strain DJ / ATCC BAA-1303), this protein is DNA-directed RNA polymerase subunit beta.